Consider the following 541-residue polypeptide: Protein VAPYRIN (541 aa).

In terms of domain architecture, MSP spans 4 to 138 (LIKLDPSNIV…IDSAIKVMFV (135 aa)). ANK repeat units lie at residues 176-205 (QGQT…DIEA), 209-238 (VGST…NTEG), 242-271 (SVFR…RVDS), 275-304 (DGNT…RTDV), 309-338 (EGDT…TKYV), 342-372 (LGKT…CAAA), 374-392 (KGEV…VING), 396-425 (NGWT…DLDA), 429-458 (DGYT…DVEA), and 462-491 (KGVS…SREG).

In terms of assembly, interacts with EX70I at the periarbuscular membrane (PAM) around the arbuscule hyphal tips. In terms of tissue distribution, expressed in roots.

It is found in the cytoplasm. The protein localises to the nucleus. The protein resides in the cell membrane. Functionally, required for arbuscular mycorrhizal (AM) symbiosis with AM fungi (e.g. Glomus versiforme and Gigaspora gigantea) both during fungal passage across root epidermis and for arbuscule formation in cortical cells; this symbiosis promotes phosphorus (P) and copper (Cu) uptake. Essential for infection by symbiotic nitrogen-fixing rhizobial bacteria (e.g. Sinorhizobium meliloti) leading to the formation of root nodules. The protein is Protein VAPYRIN of Medicago truncatula (Barrel medic).